The primary structure comprises 214 residues: Inner membrane-spanning protein YciB (214 aa).

5 helical membrane passes run 11 to 31 (ILFFIAFKLYGIYVATAVAII), 50 to 70 (MHIITLALIVILGGATLILQD), 81 to 101 (VNWGFALVFLGSHFIGQKPII), 119 to 139 (LSYMWIAFFIFSGIANIYVAY), and 149 to 169 (FKLFGLMGLTLAFILIQGVYI).

The protein belongs to the YciB family.

The protein resides in the cell inner membrane. Functionally, plays a role in cell envelope biogenesis, maintenance of cell envelope integrity and membrane homeostasis. This chain is Inner membrane-spanning protein YciB, found in Hydrogenovibrio crunogenus (strain DSM 25203 / XCL-2) (Thiomicrospira crunogena).